A 160-amino-acid polypeptide reads, in one-letter code: Deoxyuridine 5'-triphosphate nucleotidohydrolase (160 aa).

Residues 76–78 (RSG), asparagine 89, and 93–95 (TID) contribute to the substrate site. Positions 139–149 (HTLSDTERGED) are enriched in basic and acidic residues. The tract at residues 139-160 (HTLSDTERGEDGFGSTGHGSHQ) is disordered. Gly residues predominate over residues 150–160 (GFGSTGHGSHQ).

It belongs to the dUTPase family. Mg(2+) is required as a cofactor.

It catalyses the reaction dUTP + H2O = dUMP + diphosphate + H(+). Its pathway is pyrimidine metabolism; dUMP biosynthesis; dUMP from dCTP (dUTP route): step 2/2. This enzyme is involved in nucleotide metabolism: it produces dUMP, the immediate precursor of thymidine nucleotides and it decreases the intracellular concentration of dUTP so that uracil cannot be incorporated into DNA. The protein is Deoxyuridine 5'-triphosphate nucleotidohydrolase of Beijerinckia indica subsp. indica (strain ATCC 9039 / DSM 1715 / NCIMB 8712).